We begin with the raw amino-acid sequence, 163 residues long: Probable chemoreceptor glutamine deamidase CheD (163 aa).

This sequence belongs to the CheD family.

The enzyme catalyses L-glutaminyl-[protein] + H2O = L-glutamyl-[protein] + NH4(+). Its function is as follows. Probably deamidates glutamine residues to glutamate on methyl-accepting chemotaxis receptors (MCPs), playing an important role in chemotaxis. The polypeptide is Probable chemoreceptor glutamine deamidase CheD (Borrelia garinii subsp. bavariensis (strain ATCC BAA-2496 / DSM 23469 / PBi) (Borreliella bavariensis)).